Consider the following 190-residue polypeptide: Peptidyl-prolyl cis-trans isomerase A (190 aa).

Residues 1-24 (MFKSTLAAMAAVFALSALSPAAMA) form the signal peptide. Positions 27–188 (GDPHVLLTTS…KPVVILSAKV (162 aa)) constitute a PPIase cyclophilin-type domain.

Belongs to the cyclophilin-type PPIase family.

Its subcellular location is the periplasm. The enzyme catalyses [protein]-peptidylproline (omega=180) = [protein]-peptidylproline (omega=0). In terms of biological role, PPIases accelerate the folding of proteins. It catalyzes the cis-trans isomerization of proline imidic peptide bonds in oligopeptides. This chain is Peptidyl-prolyl cis-trans isomerase A (ppiA), found in Escherichia coli O157:H7.